The sequence spans 270 residues: Formamidopyrimidine-DNA glycosylase (270 aa).

Residue P2 is the Schiff-base intermediate with DNA of the active site. The active-site Proton donor is E3. The Proton donor; for beta-elimination activity role is filled by K57. DNA contacts are provided by H90, R109, and K150. An FPG-type zinc finger spans residues 235-269 (QIYGKKGCPCPKCGQKIESFTVGQRNSYVCLHCQK). Residue R259 is the Proton donor; for delta-elimination activity of the active site.

Belongs to the FPG family. Monomer. Zn(2+) is required as a cofactor.

The enzyme catalyses Hydrolysis of DNA containing ring-opened 7-methylguanine residues, releasing 2,6-diamino-4-hydroxy-5-(N-methyl)formamidopyrimidine.. The catalysed reaction is 2'-deoxyribonucleotide-(2'-deoxyribose 5'-phosphate)-2'-deoxyribonucleotide-DNA = a 3'-end 2'-deoxyribonucleotide-(2,3-dehydro-2,3-deoxyribose 5'-phosphate)-DNA + a 5'-end 5'-phospho-2'-deoxyribonucleoside-DNA + H(+). In terms of biological role, involved in base excision repair of DNA damaged by oxidation or by mutagenic agents. Acts as a DNA glycosylase that recognizes and removes damaged bases. Has a preference for oxidized purines, such as 7,8-dihydro-8-oxoguanine (8-oxoG). Has AP (apurinic/apyrimidinic) lyase activity and introduces nicks in the DNA strand. Cleaves the DNA backbone by beta-delta elimination to generate a single-strand break at the site of the removed base with both 3'- and 5'-phosphates. The protein is Formamidopyrimidine-DNA glycosylase of Actinobacillus succinogenes (strain ATCC 55618 / DSM 22257 / CCUG 43843 / 130Z).